Reading from the N-terminus, the 496-residue chain is Cytochrome P450 71D180 (496 aa).

Residues methionine 1 to methionine 21 form a helical; Signal-anchor for type II membrane protein membrane-spanning segment. Heme is bound at residue cysteine 435. Residues methionine 471–serine 496 are disordered.

Belongs to the cytochrome P450 family. The cofactor is heme.

The protein localises to the membrane. It catalyses the reaction gamma-terpinene + 2 reduced [NADPH--hemoprotein reductase] + 2 O2 = carvacrol + 2 oxidized [NADPH--hemoprotein reductase] + 3 H2O + 2 H(+). The enzyme catalyses (4S)-limonene + reduced [NADPH--hemoprotein reductase] + O2 = (1S,5R)-carveol + oxidized [NADPH--hemoprotein reductase] + H2O + H(+). The catalysed reaction is (4R)-limonene + reduced [NADPH--hemoprotein reductase] + O2 = (1R,5S)-carveol + oxidized [NADPH--hemoprotein reductase] + H2O + H(+). It participates in secondary metabolite biosynthesis; terpenoid biosynthesis. Its function is as follows. Involved in the biosynthesis of phenolic monoterpenes natural products thymol and carvacrol which have a broad range of biological activities acting as antimicrobial compounds, insecticides, antioxidants and pharmaceutical agents. Catalyzes the C2-hydroxylation of gamma-terpinene to produce carvacrol. Mediates also the C6-hydroxylation of (4S)-limonene and (4R)-limonene to form carveol. The polypeptide is Cytochrome P450 71D180 (Origanum majorana (Sweet marjoram)).